We begin with the raw amino-acid sequence, 352 residues long: DNA polymerase IV (352 aa).

The UmuC domain maps to isoleucine 4–glycine 185. Mg(2+) contacts are provided by aspartate 8 and aspartate 103. Glutamate 104 is a catalytic residue.

It belongs to the DNA polymerase type-Y family. In terms of assembly, monomer. It depends on Mg(2+) as a cofactor.

The protein localises to the cytoplasm. The catalysed reaction is DNA(n) + a 2'-deoxyribonucleoside 5'-triphosphate = DNA(n+1) + diphosphate. In terms of biological role, poorly processive, error-prone DNA polymerase involved in untargeted mutagenesis. Copies undamaged DNA at stalled replication forks, which arise in vivo from mismatched or misaligned primer ends. These misaligned primers can be extended by PolIV. Exhibits no 3'-5' exonuclease (proofreading) activity. May be involved in translesional synthesis, in conjunction with the beta clamp from PolIII. The sequence is that of DNA polymerase IV from Yersinia enterocolitica serotype O:8 / biotype 1B (strain NCTC 13174 / 8081).